We begin with the raw amino-acid sequence, 241 residues long: Transmembrane protein 176A (241 aa).

Residue Ser38 is modified to Phosphoserine. Helical transmembrane passes span Trp65–Phe85, Ser93–Tyr113, Leu127–Phe147, and Leu193–Leu213.

This sequence belongs to the TMEM176 family. In terms of assembly, interacts with MCOLN2.

Its subcellular location is the membrane. The protein is Transmembrane protein 176A (TMEM176A) of Bos taurus (Bovine).